Here is a 385-residue protein sequence, read N- to C-terminus: Phosphate acyltransferase (385 aa).

Low complexity predominate over residues 1–17; the sequence is MAAGTSIGTTPGGSTSP. The segment at 1–28 is disordered; it reads MAAGTSIGTTPGGSTSPETPPEHGLTGT.

It belongs to the PlsX family. Homodimer. Probably interacts with PlsY.

Its subcellular location is the cytoplasm. It carries out the reaction a fatty acyl-[ACP] + phosphate = an acyl phosphate + holo-[ACP]. Its pathway is lipid metabolism; phospholipid metabolism. Functionally, catalyzes the reversible formation of acyl-phosphate (acyl-PO(4)) from acyl-[acyl-carrier-protein] (acyl-ACP). This enzyme utilizes acyl-ACP as fatty acyl donor, but not acyl-CoA. The protein is Phosphate acyltransferase of Dinoroseobacter shibae (strain DSM 16493 / NCIMB 14021 / DFL 12).